A 163-amino-acid chain; its full sequence is Photosystem II extrinsic protein V (163 aa).

An N-terminal signal peptide occupies residues 1 to 26; sequence MFRRLIGVVVATVLLSFQLLVGSATA. Heme c contacts are provided by cysteine 63, cysteine 66, histidine 67, and histidine 118.

Belongs to the cytochrome c family. PsbV subfamily. PSII is composed of 1 copy each of membrane proteins PsbA, PsbB, PsbC, PsbD, PsbE, PsbF, PsbH, PsbI, PsbJ, PsbK, PsbL, PsbM, PsbT, PsbX, PsbY, PsbZ, Psb30/Ycf12, peripheral proteins PsbO, CyanoQ (PsbQ), PsbU, PsbV and a large number of cofactors. It forms dimeric complexes. It depends on heme c as a cofactor.

It is found in the cellular thylakoid membrane. Functionally, one of the extrinsic, lumenal subunits of photosystem II (PSII). PSII is a light-driven water plastoquinone oxidoreductase, using light energy to abstract electrons from H(2)O, generating a proton gradient subsequently used for ATP formation. The extrinsic proteins stabilize the structure of photosystem II oxygen-evolving complex (OEC), the ion environment of oxygen evolution and protect the OEC against heat-induced inactivation. Low-potential cytochrome c that plays a role in the OEC of PSII. The protein is Photosystem II extrinsic protein V of Nostoc punctiforme (strain ATCC 29133 / PCC 73102).